A 192-amino-acid chain; its full sequence is Ion-translocating oxidoreductase complex subunit B (192 aa).

Residues 1–26 are hydrophobic; sequence MNAIWIAVAAVSLLGLAFGAILGYAS. A 4Fe-4S domain is found at 32–91; it reads EDDPVVEKIDEILPQSQCGQCGYPGCRPYAEAISCNGEKINRCAPGGEAVMLKIAELLNV. Positions 49, 52, 57, 74, 117, 120, 123, 127, 147, 150, 153, and 157 each coordinate [4Fe-4S] cluster. 4Fe-4S ferredoxin-type domains lie at 108–137 and 138–167; these read MVAFIDENNCIGCTKCIQACPVDAIVGATR and AMHTVMSDLCTGCNLCVDPCPTHCISLQPV.

The protein belongs to the 4Fe4S bacterial-type ferredoxin family. RnfB subfamily. As to quaternary structure, the complex is composed of six subunits: RsxA, RsxB, RsxC, RsxD, RsxE and RsxG. [4Fe-4S] cluster serves as cofactor.

The protein localises to the cell inner membrane. Functionally, part of a membrane-bound complex that couples electron transfer with translocation of ions across the membrane. Required to maintain the reduced state of SoxR. This chain is Ion-translocating oxidoreductase complex subunit B, found in Escherichia coli O17:K52:H18 (strain UMN026 / ExPEC).